The sequence spans 1188 residues: Spermatogenesis-associated protein 31C1 (1188 aa).

The helical transmembrane segment at 23-43 (PWVLDIFLTLVFALGLFFLLL) threads the bilayer. Disordered stretches follow at residues 57 to 92 (PSPRKRKRHLVSQRHLVSQCPTGRRGRPRGRMKNHS), 121 to 249 (LEKG…LLTP), 483 to 510 (PGTSQAKGKPRPWQSSTSTGESSKEAQT), 530 to 567 (TPQNLSRGMESFPGKVLGATSEESERNLRKPLRSDSGS), 733 to 813 (MPER…PTVP), 934 to 1013 (NMGH…PSIS), 1121 to 1143 (QQATLKNQSRPNRDRQIRDQQPL), and 1155 to 1188 (LRHPQLLLPKKAVSPVSPPQHRPKTPSASSHHHH). 2 stretches are compositionally biased toward basic residues: residues 59-68 (PRKRKRHLVS) and 80-92 (RRGRPRGRMKNHS). A compositionally biased stretch (basic and acidic residues) spans 138 to 154 (VGKRTPDGASRSSHEPM). Positions 191 to 207 (SSLSASQPPEPSLLLER) are enriched in low complexity. Positions 210–241 (PEPPALFPHPPHTPDPLACSPPPPKGFTPPPL) are enriched in pro residues. The segment covering 495-510 (WQSSTSTGESSKEAQT) has biased composition (polar residues). Composition is skewed to polar residues over residues 783–800 (LKGSTQQSRSLGAQSSRA) and 943–954 (PNCQGSCKSQSP). Residues 960–976 (HKRENSRKPNLEKHEEM) are compositionally biased toward basic and acidic residues. Residues 1121 to 1130 (QQATLKNQSR) show a composition bias toward polar residues.

It belongs to the SPATA31 family.

The protein localises to the membrane. Its function is as follows. May play a role in spermatogenesis. This Homo sapiens (Human) protein is Spermatogenesis-associated protein 31C1 (SPATA31C1).